The sequence spans 345 residues: 3-isopropylmalate dehydrogenase (345 aa).

Residues R94, R104, R132, and D216 each contribute to the substrate site. 3 residues coordinate Mg(2+): D216, D240, and D244. 274-286 (GSAPDIAGQGIAN) provides a ligand contact to NAD(+).

It belongs to the isocitrate and isopropylmalate dehydrogenases family. LeuB type 1 subfamily. In terms of assembly, homodimer. Mg(2+) is required as a cofactor. Mn(2+) serves as cofactor.

Its subcellular location is the cytoplasm. The enzyme catalyses (2R,3S)-3-isopropylmalate + NAD(+) = 4-methyl-2-oxopentanoate + CO2 + NADH. The protein operates within amino-acid biosynthesis; L-leucine biosynthesis; L-leucine from 3-methyl-2-oxobutanoate: step 3/4. Its function is as follows. Catalyzes the oxidation of 3-carboxy-2-hydroxy-4-methylpentanoate (3-isopropylmalate) to 3-carboxy-4-methyl-2-oxopentanoate. The product decarboxylates to 4-methyl-2 oxopentanoate. This chain is 3-isopropylmalate dehydrogenase, found in Streptococcus pneumoniae (strain ATCC BAA-255 / R6).